A 696-amino-acid chain; its full sequence is Equisetin cluster transcription factor eqxF (696 aa).

Disordered stretches follow at residues M1 to R24 and N73 to Y117.

Its subcellular location is the nucleus. Its function is as follows. Transcription factor that regulates the expression of the gene cluster that mediates the biosynthesis of Equisetin. This chain is Equisetin cluster transcription factor eqxF, found in Fusarium heterosporum.